A 246-amino-acid chain; its full sequence is Aquaporin AqpM (246 aa).

Residues 1 to 11 (MVSLTKRCIAE) are Cytoplasmic-facing. A helical transmembrane segment spans residues 12 to 32 (FIGTFILVFFGAGSAAVTLMI). Topologically, residues 33 to 55 (ASGGTSPNPFNIGIGLLGGLGDW) are extracellular. A helical transmembrane segment spans residues 56 to 76 (VAIGLAFGFAIAASIYALGNI). Residues 77–103 (SGCHINPAVTIGLWSVKKFPGREVVPY) lie on the Cytoplasmic side of the membrane. The NPA 1 signature appears at 82-84 (NPA). The chain crosses the membrane as a helical span at residues 104–124 (IIAQLLGAAFGSFIFLQCAGI). Topologically, residues 125–145 (GAATVGGLGATAPFPGISYWQ) are extracellular. The helical transmembrane segment at 146 to 166 (AMLAEVVGTFLLMITIMGIAV) threads the bilayer. Over 167 to 172 (DERAPK) the chain is Cytoplasmic. The helical transmembrane segment at 173-193 (GFAGIIIGLTVAGIITTLGNI) threads the bilayer. Residues 194 to 217 (SGSSLNPARTFGPYLNDMIFAGTN) lie on the Extracellular side of the membrane. Positions 199–201 (NPA) match the NPA 2 motif. The helical transmembrane segment at 218–238 (LWNYYPIYVIGPIVGAVLAAL) threads the bilayer. The Cytoplasmic segment spans residues 239–246 (TYQYLTSE).

The protein belongs to the MIP/aquaporin (TC 1.A.8) family. In terms of assembly, homotetramer.

The protein localises to the cell membrane. Channel that permits osmotically driven movement of water in both directions. It mediates rapid entry or exit of water in response to abrupt changes in osmolarity. Also exhibits a transient but reproducible increase in the initial glycerol flux. In Methanothermobacter marburgensis (strain ATCC BAA-927 / DSM 2133 / JCM 14651 / NBRC 100331 / OCM 82 / Marburg) (Methanobacterium thermoautotrophicum), this protein is Aquaporin AqpM (aqpM).